The sequence spans 119 residues: Ribonuclease P protein component (119 aa).

This sequence belongs to the RnpA family. Consists of a catalytic RNA component (M1 or rnpB) and a protein subunit.

It catalyses the reaction Endonucleolytic cleavage of RNA, removing 5'-extranucleotides from tRNA precursor.. In terms of biological role, RNaseP catalyzes the removal of the 5'-leader sequence from pre-tRNA to produce the mature 5'-terminus. It can also cleave other RNA substrates such as 4.5S RNA. The protein component plays an auxiliary but essential role in vivo by binding to the 5'-leader sequence and broadening the substrate specificity of the ribozyme. This is Ribonuclease P protein component from Coprothermobacter proteolyticus (strain ATCC 35245 / DSM 5265 / OCM 4 / BT).